We begin with the raw amino-acid sequence, 382 residues long: Protein-arginine rhamnosyltransferase (382 aa).

DTDP-beta-L-rhamnose is bound by residues 17 to 20, Tyr187, Gln252, and 268 to 272; these read NFGD and RGEDS. The active-site Proton acceptor is the Asp20. Residue Glu270 is part of the active site.

It belongs to the glycosyltransferase 104 family.

The catalysed reaction is dTDP-beta-L-rhamnose + L-arginyl-[protein] = N(omega)-(alpha-L-rhamnosyl)-L-arginyl-[protein] + dTDP + H(+). Its function is as follows. Protein-arginine rhamnosyltransferase that catalyzes the transfer of a single rhamnose to elongation factor P (EF-P) on 'Lys-32', a modification required for EF-P-dependent rescue of polyproline stalled ribosomes. This Neisseria meningitidis protein is Protein-arginine rhamnosyltransferase.